Reading from the N-terminus, the 81-residue chain is Acyl carrier protein 2 (81 aa).

Positions Met-1 to Leu-79 constitute a Carrier domain. Ser-39 carries the O-(pantetheine 4'-phosphoryl)serine modification.

Belongs to the acyl carrier protein (ACP) family. Post-translationally, 4'-phosphopantetheine is transferred from CoA to a specific serine of apo-ACP by AcpS. This modification is essential for activity because fatty acids are bound in thioester linkage to the sulfhydryl of the prosthetic group.

It localises to the cytoplasm. The protein operates within lipid metabolism; fatty acid biosynthesis. Functionally, carrier of the growing fatty acid chain in fatty acid biosynthesis. This chain is Acyl carrier protein 2, found in Ralstonia nicotianae (strain ATCC BAA-1114 / GMI1000) (Ralstonia solanacearum).